Consider the following 143-residue polypeptide: Large ribosomal subunit protein uL11 (143 aa).

This sequence belongs to the universal ribosomal protein uL11 family. Part of the ribosomal stalk of the 50S ribosomal subunit. Interacts with L10 and the large rRNA to form the base of the stalk. L10 forms an elongated spine to which L12 dimers bind in a sequential fashion forming a multimeric L10(L12)X complex. Post-translationally, one or more lysine residues are methylated.

Functionally, forms part of the ribosomal stalk which helps the ribosome interact with GTP-bound translation factors. This is Large ribosomal subunit protein uL11 from Verminephrobacter eiseniae (strain EF01-2).